We begin with the raw amino-acid sequence, 364 residues long: UDP-N-acetylglucosamine--N-acetylmuramyl-(pentapeptide) pyrophosphoryl-undecaprenol N-acetylglucosamine transferase (364 aa).

UDP-N-acetyl-alpha-D-glucosamine-binding positions include 10 to 12 (TGG), N128, R170, S199, I250, and Q295.

The protein belongs to the glycosyltransferase 28 family. MurG subfamily.

It is found in the cell inner membrane. It carries out the reaction di-trans,octa-cis-undecaprenyl diphospho-N-acetyl-alpha-D-muramoyl-L-alanyl-D-glutamyl-meso-2,6-diaminopimeloyl-D-alanyl-D-alanine + UDP-N-acetyl-alpha-D-glucosamine = di-trans,octa-cis-undecaprenyl diphospho-[N-acetyl-alpha-D-glucosaminyl-(1-&gt;4)]-N-acetyl-alpha-D-muramoyl-L-alanyl-D-glutamyl-meso-2,6-diaminopimeloyl-D-alanyl-D-alanine + UDP + H(+). Its pathway is cell wall biogenesis; peptidoglycan biosynthesis. Cell wall formation. Catalyzes the transfer of a GlcNAc subunit on undecaprenyl-pyrophosphoryl-MurNAc-pentapeptide (lipid intermediate I) to form undecaprenyl-pyrophosphoryl-MurNAc-(pentapeptide)GlcNAc (lipid intermediate II). The protein is UDP-N-acetylglucosamine--N-acetylmuramyl-(pentapeptide) pyrophosphoryl-undecaprenol N-acetylglucosamine transferase of Chlorobium phaeobacteroides (strain DSM 266 / SMG 266 / 2430).